Consider the following 278-residue polypeptide: Hydroxyethylthiazole kinase (278 aa).

Substrate is bound at residue Met51. ATP contacts are provided by Arg127 and Ser173. A substrate-binding site is contributed by Gly201.

It belongs to the Thz kinase family. Mg(2+) serves as cofactor.

It carries out the reaction 5-(2-hydroxyethyl)-4-methylthiazole + ATP = 4-methyl-5-(2-phosphooxyethyl)-thiazole + ADP + H(+). Its pathway is cofactor biosynthesis; thiamine diphosphate biosynthesis; 4-methyl-5-(2-phosphoethyl)-thiazole from 5-(2-hydroxyethyl)-4-methylthiazole: step 1/1. In terms of biological role, catalyzes the phosphorylation of the hydroxyl group of 4-methyl-5-beta-hydroxyethylthiazole (THZ). The polypeptide is Hydroxyethylthiazole kinase (Leptothrix cholodnii (strain ATCC 51168 / LMG 8142 / SP-6) (Leptothrix discophora (strain SP-6))).